The primary structure comprises 267 residues: Expansin-B10 (267 aa).

A signal peptide spans 1–22 (MASSCLLLACVVAAAMVSAVSC). An N-linked (GlcNAc...) asparagine glycan is attached at asparagine 32. Positions 61-167 (GGACGYKDID…RRVRCKYPGE (107 aa)) constitute an Expansin-like EG45 domain. Cystine bridges form between cysteine 64-cysteine 92, cysteine 95-cysteine 162, and cysteine 100-cysteine 106. Residues 181–262 (NYFAVLVKYV…NWKANALYKS (82 aa)) enclose the Expansin-like CBD domain. A glycan (N-linked (GlcNAc...) asparagine) is linked at asparagine 213.

It belongs to the expansin family. Expansin B subfamily.

Its subcellular location is the secreted. It localises to the cell wall. The protein resides in the membrane. In terms of biological role, may cause loosening and extension of plant cell walls by disrupting non-covalent bonding between cellulose microfibrils and matrix glucans. No enzymatic activity has been found. May be required for rapid internodal elongation in deepwater rice during submergence. This chain is Expansin-B10 (EXPB10), found in Oryza sativa subsp. japonica (Rice).